A 528-amino-acid polypeptide reads, in one-letter code: Na(+)/H(+) antiporter NhaB (528 aa).

Residues Met1–Val23 are Cytoplasmic-facing. A helical transmembrane segment spans residues Ala24–Trp46. Residues Leu47–Glu95 are Periplasmic-facing. A helical transmembrane segment spans residues Val96–Phe118. Residues Thr119–Thr129 lie on the Cytoplasmic side of the membrane. Residues Leu130–Tyr163 form a helical membrane-spanning segment. Over Ser164 to Glu239 the chain is Periplasmic. A helical membrane pass occupies residues Phe240–Val262. The Cytoplasmic portion of the chain corresponds to Glu263–Asp297. Residues Val298 to Leu317 form a helical membrane-spanning segment. The Periplasmic portion of the chain corresponds to His318–Ala320. The chain crosses the membrane as a helical span at residues Ala321–Ile340. Residues Glu341 to Ala352 lie on the Cytoplasmic side of the membrane. The helical transmembrane segment at Leu353–Phe375 threads the bilayer. Over Lys376 to Gly389 the chain is Periplasmic. The helical transmembrane segment at Thr390 to Gly412 threads the bilayer. The Cytoplasmic portion of the chain corresponds to Thr413–Met477. Residues Val478–Leu500 form a helical membrane-spanning segment. Residues Glu501–His528 lie on the Periplasmic side of the membrane.

Belongs to the NhaB Na(+)/H(+) (TC 2.A.34) antiporter family.

It localises to the cell inner membrane. It carries out the reaction 2 Na(+)(in) + 3 H(+)(out) = 2 Na(+)(out) + 3 H(+)(in). Functionally, na(+)/H(+) antiporter that extrudes sodium in exchange for external protons. This chain is Na(+)/H(+) antiporter NhaB, found in Vibrio alginolyticus.